Here is a 220-residue protein sequence, read N- to C-terminus: Fructose-6-phosphate aldolase (220 aa).

The active-site Schiff-base intermediate with substrate is lysine 85.

The protein belongs to the transaldolase family. Type 3A subfamily. As to quaternary structure, homodecamer.

The protein resides in the cytoplasm. The catalysed reaction is beta-D-fructose 6-phosphate = dihydroxyacetone + D-glyceraldehyde 3-phosphate. Catalyzes the reversible formation of fructose 6-phosphate from dihydroxyacetone and D-glyceraldehyde 3-phosphate via an aldolization reaction. The sequence is that of Fructose-6-phosphate aldolase from Salmonella typhi.